A 68-amino-acid chain; its full sequence is MKSIVLIFLKFWQKFISPLYPSSCRYYPTCSTYAIMAVEKYGVLKGLIKAFFRVLRCNPFFKGGVDYP.

Belongs to the UPF0161 family.

The protein resides in the cell inner membrane. Its function is as follows. Could be involved in insertion of integral membrane proteins into the membrane. In Aquifex aeolicus (strain VF5), this protein is Putative membrane protein insertion efficiency factor.